Here is a 266-residue protein sequence, read N- to C-terminus: Integral membrane protein 2B (266 aa).

Residues 1-54 (MVKVTFNSALAQKEAKKDEPKSGEEALIIPPDAVAVDCKDPDDVVPVGQRRAWC) are Cytoplasmic-facing. Residues 55–75 (WCMCFGLAFMLAGVILGGAYL) traverse the membrane as a helical; Signal-anchor for type II membrane protein segment. The Lumenal segment spans residues 76-266 (YKYFALQPDD…KFAVETLICS (191 aa)). A necessary for interaction with APP and inhibitor effects on APP processing region spans residues 102–134 (EPSADAPAALYQTIEENIKIFEEEEVEFISVPV). One can recognise a BRICHOS domain in the interval 137-231 (FADSDPANIV…LCHDKETYKL (95 aa)). 2 disulfides stabilise this stretch: Cys-164–Cys-223 and Cys-248–Cys-265. Asn-170 carries N-linked (GlcNAc...) asparagine glycosylation.

Belongs to the ITM2 family. As to quaternary structure, homodimer; disulfide-linked. Interacts with SPPL2A and SPPL2B. Interacts with APP. Mature BRI2 (mBRI2) interacts with the APP amyloid-beta A4 protein; the interaction occurs at the cell surface and in the endocytic compartments and enable alpha- and beta-secretase-induced APP cleavage inhibition. Mature BRI2 (mBRI2) interacts with the APP C99; the interaction occurs in the endocytic compartments and enable gamma-secretase-induced C99 cleavage inhibition. May form heterodimers with Bri23 peptide and APP amyloid-beta protein 40. Interacts with ADAM7 in sperm; the interaction increases following capacitation. In terms of processing, the ectodomain C-terminal part of the imBRI2 is processed by furin producing a secreted Bri23 peptide and a mature BRI2, membrane form (mBRI2). The remaining part of the ectodomain of mBRI2 containing the BRICHOS domain is cleaved by ADAM10 and is secreted (BRI2C, soluble form). The membrane-bound N-terminal fragment (BRI2C, membrane form) is further proteolytically processed by SPPL2A and SPPL2B through regulated intramembrane proteolysis producing a secreted C-peptide and a BRI2 intracellular domain (BRI2 ICD) released in the cytosol. Shedding by ADAM10 facilitates intramembrane cleavage but is not absolutely required for BRI2 ICD generation. Glycosylation at Asn-170 is important for cell surface localization, but doesn't affect furin- and ADAM10-induced proteolytic processing. In terms of tissue distribution, ubiquitous. Expressed in brain.

The protein resides in the golgi apparatus membrane. Its subcellular location is the cell membrane. It localises to the endosome membrane. The protein localises to the secreted. Functionally, plays a regulatory role in the processing of the amyloid-beta A4 precursor protein (APP) and acts as an inhibitor of the amyloid-beta peptide aggregation and fibrils deposition. Plays a role in the induction of neurite outgrowth. Functions as a protease inhibitor by blocking access of secretases to APP cleavage sites. Its function is as follows. Mature BRI2 (mBRI2) functions as a modulator of the amyloid-beta A4 precursor protein (APP) processing leading to a strong reduction in the secretion of secretase-processed amyloid-beta protein 40 and amyloid-beta protein 42. Bri23 peptide prevents aggregation of APP amyloid-beta protein 42 into toxic oligomers. In Homo sapiens (Human), this protein is Integral membrane protein 2B (ITM2B).